A 319-amino-acid polypeptide reads, in one-letter code: Ribonucleoside-diphosphate reductase small chain (319 aa).

Residues Asp-70, Glu-101, and His-104 each coordinate Fe cation. The active site involves Tyr-108. Residues Glu-163, Glu-197, and His-200 each contribute to the Fe cation site. The interval 313–319 is interaction with R1; the sequence is FSLDVDF.

Belongs to the ribonucleoside diphosphate reductase small chain family. In terms of assembly, interacts with RNR1/OPG080 subunit. Can interact with host RNR1 supunit. Requires Fe cation as cofactor.

It carries out the reaction a 2'-deoxyribonucleoside 5'-diphosphate + [thioredoxin]-disulfide + H2O = a ribonucleoside 5'-diphosphate + [thioredoxin]-dithiol. In terms of biological role, ribonucleoside-diphosphate reductase holoenzyme provides the precursors necessary for viral DNA synthesis. Allows virus growth in non-dividing cells. Catalyzes the biosynthesis of deoxyribonucleotides from the corresponding ribonucleotides. This chain is Ribonucleoside-diphosphate reductase small chain (OPG048), found in Vaccinia virus (strain Copenhagen) (VACV).